The primary structure comprises 517 residues: Aldehyde dehydrogenase, mitochondrial (517 aa).

The N-terminal 17 residues, 1-17, are a transit peptide targeting the mitochondrion; it reads MLRAAARFGPRLGRRLL. The short motif at 9 to 24 is the SIFI-degron element; the sequence is GPRLGRRLLSAAATQA. N6-acetyllysine occurs at positions 52, 73, 78, and 159. 262-267 provides a ligand contact to NAD(+); that stretch reads GSTEIG. E285 (proton acceptor) is an active-site residue. C319 functions as the Nucleophile in the catalytic mechanism. N6-acetyllysine is present on residues K368, K383, K426, K428, and K451.

This sequence belongs to the aldehyde dehydrogenase family. As to quaternary structure, homotetramer. Post-translationally, in response to mitochondrial stress, the precursor protein is ubiquitinated by the SIFI complex in the cytoplasm before mitochondrial import, leading to its degradation. Within the SIFI complex, UBR4 initiates ubiquitin chain that are further elongated or branched by KCMF1.

It localises to the mitochondrion matrix. The enzyme catalyses an aldehyde + NAD(+) + H2O = a carboxylate + NADH + 2 H(+). It functions in the pathway alcohol metabolism; ethanol degradation; acetate from ethanol: step 2/2. In terms of biological role, required for clearance of cellular formaldehyde, a cytotoxic and carcinogenic metabolite that induces DNA damage. The polypeptide is Aldehyde dehydrogenase, mitochondrial (ALDH2) (Homo sapiens (Human)).